We begin with the raw amino-acid sequence, 309 residues long: Homoserine O-succinyltransferase (309 aa).

The active-site Acyl-thioester intermediate is C142. Residues K163 and S192 each coordinate substrate. H235 (proton acceptor) is an active-site residue. The active site involves E237. R249 contributes to the substrate binding site.

The protein belongs to the MetA family.

The protein localises to the cytoplasm. It carries out the reaction L-homoserine + succinyl-CoA = O-succinyl-L-homoserine + CoA. Its pathway is amino-acid biosynthesis; L-methionine biosynthesis via de novo pathway; O-succinyl-L-homoserine from L-homoserine: step 1/1. Transfers a succinyl group from succinyl-CoA to L-homoserine, forming succinyl-L-homoserine. The protein is Homoserine O-succinyltransferase of Erwinia tasmaniensis (strain DSM 17950 / CFBP 7177 / CIP 109463 / NCPPB 4357 / Et1/99).